A 311-amino-acid polypeptide reads, in one-letter code: MRLVFAGTPAVALPSLRALLDSPRHQVVAVVTRPDRPAGRGRHQRSSPVRELADERGLEVLAPARASDPDFLARLGEIAPDCCPVVAYGALLPRPALDIPKHGWVNLHFSLLPAYRGAAPVQRAVLAGEDMTGASVFEIEPALDSGPVYGVLTERIRPTDTSGDLLDRLAVAGARLLEAVMDGIEDGTLQARPQPSDGVSLAPKLTVEDVRVDWSAPAAAVDRLVRAATPAPGAWTTFRDRRVKLGPVRPAPAGHPPLPSGRLAAPERGLVLVGTATTPVVLDEVRPEGKAPMPAADWIRGLRPGTDEAFA.

The disordered stretch occupies residues 33-52 (RPDRPAGRGRHQRSSPVREL). 110 to 113 (SLLP) is a (6S)-5,6,7,8-tetrahydrofolate binding site.

Belongs to the Fmt family.

The catalysed reaction is L-methionyl-tRNA(fMet) + (6R)-10-formyltetrahydrofolate = N-formyl-L-methionyl-tRNA(fMet) + (6S)-5,6,7,8-tetrahydrofolate + H(+). In terms of biological role, attaches a formyl group to the free amino group of methionyl-tRNA(fMet). The formyl group appears to play a dual role in the initiator identity of N-formylmethionyl-tRNA by promoting its recognition by IF2 and preventing the misappropriation of this tRNA by the elongation apparatus. The protein is Methionyl-tRNA formyltransferase of Parafrankia sp. (strain EAN1pec).